Consider the following 363-residue polypeptide: MGTAKPPGRGCGALPRWLLGAALLLGLRLCMELRHAGSGPPGRRDLRGPPRTHLLPAPGPLRGTRRRQVTYVRSGRRALPRGGVSTTPPEPSCCAQLGLPSRKGPRWHIELQPWAGPSRSLDEEASRFLNYIGTTQIACDRMGTNSVATDSGPALKPWLVCLDDRFGLAHQIRTKQCRLYSLGLGSDDTHFEVSMANGGCEVHRFDPSVRSAHVLQSQRLWHHRLSIDWRDPHPAVAAQKPYSNTRKLGSILNEFGHHKIDVLKADLESAEWKVLENLILEDVLEQIGQLIFEIHLHWPGFEVSGSESSVVRFWYSLLKELERKDFRLFHTYKDLSKPQLFLKKDIFNASSCYTLSWVNTRWR.

The first 38 residues, 1-38 (MGTAKPPGRGCGALPRWLLGAALLLGLRLCMELRHAGS), serve as a signal peptide directing secretion. A disordered region spans residues 37-62 (GSGPPGRRDLRGPPRTHLLPAPGPLR).

Belongs to the methyltransferase superfamily.

Its subcellular location is the secreted. Functionally, probable methyltransferase. In Rattus norvegicus (Rat), this protein is Probable methyltransferase-like protein 24 (Mettl24).